Here is a 731-residue protein sequence, read N- to C-terminus: 1,4-alpha-glucan branching enzyme GlgB (731 aa).

Aspartate 412 functions as the Nucleophile in the catalytic mechanism. Residue glutamate 465 is the Proton donor of the active site.

It belongs to the glycosyl hydrolase 13 family. GlgB subfamily. In terms of assembly, monomer.

It carries out the reaction Transfers a segment of a (1-&gt;4)-alpha-D-glucan chain to a primary hydroxy group in a similar glucan chain.. It functions in the pathway glycan biosynthesis; glycogen biosynthesis. Its function is as follows. Catalyzes the formation of the alpha-1,6-glucosidic linkages in glycogen by scission of a 1,4-alpha-linked oligosaccharide from growing alpha-1,4-glucan chains and the subsequent attachment of the oligosaccharide to the alpha-1,6 position. The sequence is that of 1,4-alpha-glucan branching enzyme GlgB from Bordetella pertussis (strain Tohama I / ATCC BAA-589 / NCTC 13251).